Reading from the N-terminus, the 566-residue chain is Poly(A) polymerase pla1 (566 aa).

Residues 86–88 (YGS), 99–101 (DID), Asp-153, Lys-214, Tyr-223, and 232–233 (GV) each bind ATP. Mg(2+) is bound by residues Asp-99, Asp-101, and Asp-153. Disordered regions lie at residues 437-463 (HEKL…SENG) and 530-566 (DEVF…VSTA).

The protein belongs to the poly(A) polymerase family. Requires Mg(2+) as cofactor. Mn(2+) is required as a cofactor.

The protein resides in the nucleus. It catalyses the reaction RNA(n) + ATP = RNA(n)-3'-adenine ribonucleotide + diphosphate. In terms of biological role, polymerase that creates the 3'-poly(A) tail of mRNA's. May acquire specificity through interaction with a cleavage and polyadenylation factor (CF I). This chain is Poly(A) polymerase pla1 (pla1), found in Schizosaccharomyces pombe (strain 972 / ATCC 24843) (Fission yeast).